A 264-amino-acid chain; its full sequence is Small ribosomal subunit protein uS2 (264 aa).

Residues 225 to 264 (GKKAREERQLAAAKDAAGDAKPEAEEAPVAAEAEEAPAAE) are disordered.

The protein belongs to the universal ribosomal protein uS2 family.

This Corynebacterium glutamicum (strain R) protein is Small ribosomal subunit protein uS2.